The primary structure comprises 362 residues: 2-oxoglutarate-dependent dioxygenase lolO1 (362 aa).

One can recognise a Fe2OG dioxygenase domain in the interval 199 to 312 (TWNYFLGQPV…RYSLVFFGHL (114 aa)). Fe cation contacts are provided by His222, Asp224, and His280. Arg303 is a binding site for 2-oxoglutarate.

Belongs to the iron/ascorbate-dependent oxidoreductase family. Fe(2+) serves as cofactor.

It participates in alkaloid biosynthesis. In terms of biological role, 2-oxoglutarate-dependent dioxygenase; part of the gene cluster that mediates the biosynthesis of loline alkaloids, potent insecticidal agents composed of a pyrrolizidine ring system and an uncommon ether bridge linking carbons 2 and 7. Lolines are structurally differentiated by the various modifications of the L-amino group and include norloline, loline, N-methylloline, N-acetylloline, N-acetylnorloline, and N-formylloline. The first committed step is the condensation of O-acetyl-L-homoserine (derived from L-aspartic acid) and L-proline, probably catalyzed by the gamma-type pyridoxal 5'-phosphate(PLP)-dependent enzyme lolC, to give the diamino diacid, NACPP. Ensuing cyclization, decarboxylation, and acetylation steps yield 1-exo-acetamidopyrrolizidine (AcAP). LolO is required for installation of the ether bridge upon the pathway intermediate, 1-exo-acetamidopyrrolizidine (AcAP). In sequential 2-oxoglutarate- and O(2)-consuming steps, lolO removes hydrogens from C2 and C7 of AcAP to form both carbon-oxygen bonds in N-acetylnorloline (NANL), the precursor to all other lolines. The enzymes lolD, lolE, lolF and lolT have also been proposed to be involved in the ether-bridge installation. Further processing of the exocyclic moiety of NANL by fungal N-acetamidase (LolN), methyltransferase (LolM), and cytochrome P450 (LolP) enzymes, with occasional involvement of a plant acetyltransferase, generates the other known lolines. LolN transforms NANL to norlonine which is monomethylated and dimethylated to respectively lonine and N-methyllonine (NML) by lolM. LolP catalyzes hydroxylation of the methyl group in N-methylloline (NML) and further oxygenation to N-formylloline (NFL). A plant acetyltransferase is responsible for the acetylation of loline to form N-acetylloline (NAL). LolA might interact with aspartate kinase to prevent feedback inhibition of its activity by these end products and thereby promote production of l-homoserine from l-aspartate. The chain is 2-oxoglutarate-dependent dioxygenase lolO1 from Epichloe uncinata (Endophyte fungus).